Reading from the N-terminus, the 381-residue chain is Ceropsin (381 aa).

Residues 1–62 are Extracellular-facing; that stretch reads MSISMDAGPG…MNPLWHALLG (62 aa). The N-linked (GlcNAc...) asparagine glycan is linked to Asn-28. Residues 63–83 traverse the membrane as a helical segment; it reads FTIGVLGFISMMGNGMVIYIF. The Cytoplasmic portion of the chain corresponds to 84–96; sequence MTTKNLKTPSNLL. The chain crosses the membrane as a helical span at residues 97-117; it reads VVNLAFSDFLMMCAMSPAMVI. The Extracellular portion of the chain corresponds to 118–133; sequence NCYNETWVFGPFACEL. Residue Asn-121 is glycosylated (N-linked (GlcNAc...) asparagine). Residues Cys-131 and Cys-208 are joined by a disulfide bond. The helical transmembrane segment at 134–154 threads the bilayer; the sequence is YGCAGSLFGCASIWTMTMIAF. Residues 155 to 173 lie on the Cytoplasmic side of the membrane; that stretch reads DRYNVIVKGIAAKPMTNNG. A helical membrane pass occupies residues 174–194; that stretch reads ALLRILGIWAFSLAWTVAPFF. Over 195-221 the chain is Extracellular; the sequence is GWNRYVPEGNMTACGTDYLTKDWFSRS. The N-linked (GlcNAc...) asparagine glycan is linked to Asn-204. A helical membrane pass occupies residues 222 to 242; that stretch reads YIVVYSVFVYFAPLLLIVYSY. Residues 243–284 lie on the Cytoplasmic side of the membrane; the sequence is YYIVQAVSAHEKAMREQAKKMNVASLRSSEAANTSTECKLAK. A helical transmembrane segment spans residues 285–305; sequence VALMTISLWFMAWTPYLVINY. Topologically, residues 306–316 are extracellular; it reads TGILESAPISP. Residues 317–339 form a helical membrane-spanning segment; the sequence is LATIWGSLFAKANAVYNPIVYGI. The Cytoplasmic segment spans residues 340 to 381; sequence SHPKYQAALYKRFPVLQCHSTTTDEASSVASGTTVMEEKPTA.

This sequence belongs to the G-protein coupled receptor 1 family. Opsin subfamily. As to expression, expressed bilaterally in dorsal and ventral anterior protocerebral cells and bilaterally in the dorsal posterior protocerebral and lateral posterior tritocerebral cells (at protein level). Expressed in the larval brain but not in the subesophageal ganglion or thoracic ganglion.

The protein resides in the membrane. In terms of biological role, visual pigments are the light-absorbing molecules that mediate vision. They consist of an apoprotein, opsin, covalently linked to cis-retinal. May play a role in photoperiodic photoreception. In Bombyx mori (Silk moth), this protein is Ceropsin.